The primary structure comprises 379 residues: DNA replication and repair protein RecF (379 aa).

34-41 (GDNGAGKT) is a binding site for ATP.

The protein belongs to the RecF family.

The protein resides in the cytoplasm. The RecF protein is involved in DNA metabolism; it is required for DNA replication and normal SOS inducibility. RecF binds preferentially to single-stranded, linear DNA. It also seems to bind ATP. This chain is DNA replication and repair protein RecF, found in Mesorhizobium japonicum (strain LMG 29417 / CECT 9101 / MAFF 303099) (Mesorhizobium loti (strain MAFF 303099)).